Reading from the N-terminus, the 292-residue chain is Shikimate dehydrogenase (NADP(+)) (292 aa).

Shikimate is bound by residues 25–27 and threonine 72; that span reads SKS. Catalysis depends on lysine 76, which acts as the Proton acceptor. Shikimate is bound by residues asparagine 97 and aspartate 113. NADP(+) contacts are provided by residues 137 to 141, 161 to 166, and methionine 230; these read GAGGA and NRTQSK. Tyrosine 232 contributes to the shikimate binding site. Glycine 254 serves as a coordination point for NADP(+).

It belongs to the shikimate dehydrogenase family. In terms of assembly, homodimer.

It carries out the reaction shikimate + NADP(+) = 3-dehydroshikimate + NADPH + H(+). Its pathway is metabolic intermediate biosynthesis; chorismate biosynthesis; chorismate from D-erythrose 4-phosphate and phosphoenolpyruvate: step 4/7. Involved in the biosynthesis of the chorismate, which leads to the biosynthesis of aromatic amino acids. Catalyzes the reversible NADPH linked reduction of 3-dehydroshikimate (DHSA) to yield shikimate (SA). This chain is Shikimate dehydrogenase (NADP(+)), found in Shewanella sp. (strain MR-7).